The primary structure comprises 865 residues: Leucine-rich repeat-containing protein 66 (865 aa).

The chain crosses the membrane as a helical span at residues 4-24 (FYARVTVMVTGLCFVGTVTNP). N-linked (GlcNAc...) asparagine glycosylation occurs at Asn-42. LRR repeat units lie at residues 138 to 160 (RLKV…WKLK), 161 to 182 (PLCS…GFHG), 185 to 206 (QLKS…AFKG), 209 to 230 (KLQV…VTIA), and 235 to 255 (NLEL…ANFQ). Residue Asn-248 is glycosylated (N-linked (GlcNAc...) asparagine). Residues 366–386 (ALAVCLSVFITFVVAFCLGAF) form a helical membrane-spanning segment. 2 disordered regions span residues 463-522 (RMLG…PGQH) and 654-749 (DTPS…AESV). Positions 470–479 (MDPSSQQSPG) are enriched in polar residues. The segment covering 675-688 (AVQRDASFDPHDDL) has biased composition (basic and acidic residues). A compositionally biased stretch (polar residues) spans 702–713 (FTLSSEGSQDTR). Ser-714 and Ser-748 each carry phosphoserine. The region spanning 728-759 (SQPLPSRNLGEYKDSVTSAESVEDITSQQTLE) is the LRRNT domain. Asn-787 carries an N-linked (GlcNAc...) asparagine glycan. The interval 840 to 865 (FPNIDSSPSPPCSDQDPSDPEEHDTK) is disordered. A compositionally biased stretch (acidic residues) spans 855–865 (DPSDPEEHDTK).

It localises to the membrane. In Rattus norvegicus (Rat), this protein is Leucine-rich repeat-containing protein 66 (Lrrc66).